The sequence spans 79 residues: D-alanyl carrier protein (79 aa).

In terms of domain architecture, Carrier spans 1 to 77 (MDTKQGVLDI…KIVAKVESLE (77 aa)). Ser35 carries the post-translational modification O-(pantetheine 4'-phosphoryl)serine.

The protein belongs to the DltC family. 4'-phosphopantetheine is transferred from CoA to a specific serine of apo-DCP.

The protein resides in the cytoplasm. It functions in the pathway cell wall biogenesis; lipoteichoic acid biosynthesis. Functionally, carrier protein involved in the D-alanylation of lipoteichoic acid (LTA). The loading of thioester-linked D-alanine onto DltC is catalyzed by D-alanine--D-alanyl carrier protein ligase DltA. The DltC-carried D-alanyl group is further transferred to cell membrane phosphatidylglycerol (PG) by forming an ester bond, probably catalyzed by DltD. D-alanylation of LTA plays an important role in modulating the properties of the cell wall in Gram-positive bacteria, influencing the net charge of the cell wall. In Lactobacillus helveticus (strain DPC 4571), this protein is D-alanyl carrier protein.